Consider the following 263-residue polypeptide: 3-deoxy-manno-octulosonate cytidylyltransferase (263 aa).

Belongs to the KdsB family.

The protein localises to the cytoplasm. The enzyme catalyses 3-deoxy-alpha-D-manno-oct-2-ulosonate + CTP = CMP-3-deoxy-beta-D-manno-octulosonate + diphosphate. It functions in the pathway nucleotide-sugar biosynthesis; CMP-3-deoxy-D-manno-octulosonate biosynthesis; CMP-3-deoxy-D-manno-octulosonate from 3-deoxy-D-manno-octulosonate and CTP: step 1/1. Its pathway is bacterial outer membrane biogenesis; lipopolysaccharide biosynthesis. Activates KDO (a required 8-carbon sugar) for incorporation into bacterial lipopolysaccharide in Gram-negative bacteria. The polypeptide is 3-deoxy-manno-octulosonate cytidylyltransferase (Burkholderia mallei (strain NCTC 10229)).